Here is a 313-residue protein sequence, read N- to C-terminus: Ribosomal RNA small subunit methyltransferase H (313 aa).

Residues 35–37 (GGH), D55, F80, D102, and Q109 contribute to the S-adenosyl-L-methionine site.

The protein belongs to the methyltransferase superfamily. RsmH family.

The protein resides in the cytoplasm. It catalyses the reaction cytidine(1402) in 16S rRNA + S-adenosyl-L-methionine = N(4)-methylcytidine(1402) in 16S rRNA + S-adenosyl-L-homocysteine + H(+). Functionally, specifically methylates the N4 position of cytidine in position 1402 (C1402) of 16S rRNA. This is Ribosomal RNA small subunit methyltransferase H from Shewanella denitrificans (strain OS217 / ATCC BAA-1090 / DSM 15013).